Consider the following 147-residue polypeptide: Endothelial differentiation-related factor 1 homolog (147 aa).

The interval Met1–His69 is disordered. Over residues Arg33–Lys42 the composition is skewed to basic and acidic residues. The segment covering Ala46–Thr58 has biased composition (polar residues). Over residues Ala59 to His69 the composition is skewed to basic and acidic residues. The region spanning Ile81–Lys135 is the HTH cro/C1-type domain. Residues Gln92–Cys111 constitute a DNA-binding region (H-T-H motif).

It localises to the nucleus. Probable transcriptional coactivator. In Xenopus laevis (African clawed frog), this protein is Endothelial differentiation-related factor 1 homolog (edf1).